A 655-amino-acid polypeptide reads, in one-letter code: D-xylonate dehydratase YjhG (655 aa).

The protein belongs to the IlvD/Edd family.

The catalysed reaction is D-xylonate = 2-dehydro-3-deoxy-D-arabinonate + H2O. Its activity is regulated as follows. Activity is increased in the presence of Mn(+) and Mg(2+). Inhibited by thiol compounds. Its function is as follows. Catalyzes the dehydration of D-xylonic acid to form 2-dehydro-3-deoxy-D-pentonate. In Escherichia coli (strain K12), this protein is D-xylonate dehydratase YjhG (yjhG).